Here is a 358-residue protein sequence, read N- to C-terminus: Alanine racemase (358 aa).

The active-site Proton acceptor; specific for D-alanine is the lysine 34. Lysine 34 is subject to N6-(pyridoxal phosphate)lysine. Arginine 130 provides a ligand contact to substrate. Tyrosine 254 (proton acceptor; specific for L-alanine) is an active-site residue. Methionine 302 is a binding site for substrate.

This sequence belongs to the alanine racemase family. The cofactor is pyridoxal 5'-phosphate.

It catalyses the reaction L-alanine = D-alanine. Its pathway is amino-acid biosynthesis; D-alanine biosynthesis; D-alanine from L-alanine: step 1/1. In terms of biological role, catalyzes the interconversion of L-alanine and D-alanine. May also act on other amino acids. This Actinobacillus succinogenes (strain ATCC 55618 / DSM 22257 / CCUG 43843 / 130Z) protein is Alanine racemase (alr).